Reading from the N-terminus, the 2581-residue chain is Highly reducing polyketide synthase sorA (2581 aa).

The 423-residue stretch at 14–436 folds into the Ketosynthase family 3 (KS3) domain; that stretch reads SEPIAIIGMS…GSNAHIILED (423 aa). Active-site for beta-ketoacyl synthase activity residues include Cys187, His322, and His359. The interval 574–868 is malonyl-CoA:ACP transacylase (MAT) domain; sequence VFTGQGAQWN…VVEVGPHTAL (295 aa). The segment at 966-1103 is N-terminal hotdog fold; the sequence is HDLLGSIVEG…GLVSVELGES (138 aa). Positions 966-1270 are dehydratase (DH) domain; it reads HDLLGSIVEG…GFSYQSLGRS (305 aa). The region spanning 966-1273 is the PKS/mFAS DH domain; sequence HDLLGSIVEG…YQSLGRSTSL (308 aa). Residue His998 is the Proton acceptor; for dehydratase activity of the active site. Positions 1119–1273 are C-terminal hotdog fold; that stretch reads TRRILPADLF…YQSLGRSTSL (155 aa). Asp1184 functions as the Proton donor; for dehydratase activity in the catalytic mechanism. A methyltransferase (CMet) domain region spans residues 1461–1568; sequence LEVGAATGAI…SSLLKPGGTL (108 aa). The segment at 1873–2184 is enoyl reductase (ER)domain; the sequence is LKPDLLVFGD…AGDQIGKVVL (312 aa). Positions 2207-2389 are ketoreductase (KR) domain; sequence VSYLIVGGSG…AVSIDLSVVN (183 aa). The 78-residue stretch at 2497-2574 folds into the Carrier domain; that stretch reads DAVRVVGTAI…QLAIDVVDRS (78 aa). Position 2534 is an O-(pantetheine 4'-phosphoryl)serine (Ser2534).

Its pathway is secondary metabolite biosynthesis. Highly reducing polyketide synthase; part of the gene cluster that mediates the biosynthesis of sorbicillinoids, a diverse group of yellow secondary metabolites that restrict growth of competing pathogenic fungi but not of bacteria. Sorbicillinoids biosynthesis requires the action of two PKSs. SorA iteratively combines three acetyl units and the growing chain is modified by the ketoacyl reductase subunit, and optional by the enoyl reductase subunit in the second cycle. The polyketide is then handed over to the PKS SorB, which adds three more acetyl units, and two methyl groups. SorB releases an aldehyde, which undergoes spontaneous cyclization resulting in the formation of sorbicillin or 2',3'-dihydrosorbicillin. The monooxygenase sorC oxidizes sorbicillin and 2',3'-dihydrosorbicillin to 2',3'-dihydrosorbicillinol and sorbicillinol, respectively. The oxidoreductase sorD further converts sorbicillinol into oxosorbicillinol. Sorbicillinol is the building block for the other sorbicillinoids such as disorbicillinol, bisvertinolon, and dihydrobisvertinolone. This Penicillium rubens (strain ATCC 28089 / DSM 1075 / NRRL 1951 / Wisconsin 54-1255) (Penicillium chrysogenum) protein is Highly reducing polyketide synthase sorA.